A 362-amino-acid chain; its full sequence is 3-dehydroquinate synthase (362 aa).

NAD(+) contacts are provided by residues 71–76, 105–109, 129–130, Lys-142, and Lys-151; these read DGEQNK, GVIGD, and TT. Zn(2+)-binding residues include Glu-184, His-247, and His-264.

It belongs to the sugar phosphate cyclases superfamily. Dehydroquinate synthase family. Requires Co(2+) as cofactor. Zn(2+) is required as a cofactor. NAD(+) serves as cofactor.

Its subcellular location is the cytoplasm. It catalyses the reaction 7-phospho-2-dehydro-3-deoxy-D-arabino-heptonate = 3-dehydroquinate + phosphate. It functions in the pathway metabolic intermediate biosynthesis; chorismate biosynthesis; chorismate from D-erythrose 4-phosphate and phosphoenolpyruvate: step 2/7. In terms of biological role, catalyzes the conversion of 3-deoxy-D-arabino-heptulosonate 7-phosphate (DAHP) to dehydroquinate (DHQ). This Blochmanniella pennsylvanica (strain BPEN) protein is 3-dehydroquinate synthase.